The sequence spans 271 residues: GATA transcription factor 19 (271 aa).

A disordered region spans residues 1-23 (MAAEPPADGRDPPADDGAAGDGA). Positions 33 to 68 (LSAASEQLTLVYQGEVYVFDPVPPQKVQAVLLVLGG) constitute a Tify domain. The CCT domain maps to 95 to 137 (RVASLMRFREKRKERCFDKKIRYSVRKEVAQKMKRRKGQFAGR). Residues 166 to 193 (CQNCGISSRLTPAMRRGPAGPRSLCNAC) form a GATA-type zinc finger. Positions 238–271 (NQTTMKTDTEMVPEQEQKADVLPPTKEEDSMATS) are disordered. Over residues 252 to 271 (QEQKADVLPPTKEEDSMATS) the composition is skewed to basic and acidic residues.

The protein belongs to the type IV zinc-finger family. Class C subfamily.

It is found in the nucleus. Functionally, transcriptional activator that specifically binds 5'-GATA-3' or 5'-GAT-3' motifs within gene promoters. The polypeptide is GATA transcription factor 19 (Oryza sativa subsp. japonica (Rice)).